A 207-amino-acid polypeptide reads, in one-letter code: Outer-membrane lipoprotein LolB (207 aa).

The N-terminal stretch at 1-21 (MPMRKRHFYRLLPLASLLLAA) is a signal peptide. Cysteine 22 carries the N-palmitoyl cysteine lipid modification. Cysteine 22 carries S-diacylglycerol cysteine lipidation.

Belongs to the LolB family. As to quaternary structure, monomer.

The protein localises to the cell outer membrane. In terms of biological role, plays a critical role in the incorporation of lipoproteins in the outer membrane after they are released by the LolA protein. This chain is Outer-membrane lipoprotein LolB, found in Yersinia pseudotuberculosis serotype O:3 (strain YPIII).